Consider the following 237-residue polypeptide: 7-cyano-7-deazaguanine synthase (237 aa).

Tyrosine 9–leucine 19 contributes to the ATP binding site. The Zn(2+) site is built by cysteine 189, cysteine 199, cysteine 202, and cysteine 205.

This sequence belongs to the QueC family. Zn(2+) serves as cofactor.

The catalysed reaction is 7-carboxy-7-deazaguanine + NH4(+) + ATP = 7-cyano-7-deazaguanine + ADP + phosphate + H2O + H(+). It functions in the pathway purine metabolism; 7-cyano-7-deazaguanine biosynthesis. Its function is as follows. Catalyzes the ATP-dependent conversion of 7-carboxy-7-deazaguanine (CDG) to 7-cyano-7-deazaguanine (preQ(0)). The chain is 7-cyano-7-deazaguanine synthase from Geobacter sulfurreducens (strain ATCC 51573 / DSM 12127 / PCA).